We begin with the raw amino-acid sequence, 351 residues long: Holliday junction branch migration complex subunit RuvB (351 aa).

The segment covering 1-12 has biased composition (acidic residues); that stretch reads MGRFEDDAEVED. The interval 1-23 is disordered; that stretch reads MGRFEDDAEVEDREVSPALTVGE. Positions 1-191 are large ATPase domain (RuvB-L); that stretch reads MGRFEDDAEV…FGFTAHMDFY (191 aa). Residues leucine 30, arginine 31, glycine 72, lysine 75, threonine 76, serine 77, 138 to 140, arginine 181, tyrosine 191, and arginine 228 contribute to the ATP site; that span reads EDF. Residue threonine 76 participates in Mg(2+) binding. The segment at 192 to 262 is small ATPAse domain (RuvB-S); the sequence is EPVELERVLA…IAKSALEVYD (71 aa). Residues 265 to 351 are head domain (RuvB-H); sequence ELGLDRLDRA…TGIGQAGLFD (87 aa). Arginine 320 and arginine 325 together coordinate DNA.

Belongs to the RuvB family. Homohexamer. Forms an RuvA(8)-RuvB(12)-Holliday junction (HJ) complex. HJ DNA is sandwiched between 2 RuvA tetramers; dsDNA enters through RuvA and exits via RuvB. An RuvB hexamer assembles on each DNA strand where it exits the tetramer. Each RuvB hexamer is contacted by two RuvA subunits (via domain III) on 2 adjacent RuvB subunits; this complex drives branch migration. In the full resolvosome a probable DNA-RuvA(4)-RuvB(12)-RuvC(2) complex forms which resolves the HJ.

It localises to the cytoplasm. The enzyme catalyses ATP + H2O = ADP + phosphate + H(+). The RuvA-RuvB-RuvC complex processes Holliday junction (HJ) DNA during genetic recombination and DNA repair, while the RuvA-RuvB complex plays an important role in the rescue of blocked DNA replication forks via replication fork reversal (RFR). RuvA specifically binds to HJ cruciform DNA, conferring on it an open structure. The RuvB hexamer acts as an ATP-dependent pump, pulling dsDNA into and through the RuvAB complex. RuvB forms 2 homohexamers on either side of HJ DNA bound by 1 or 2 RuvA tetramers; 4 subunits per hexamer contact DNA at a time. Coordinated motions by a converter formed by DNA-disengaged RuvB subunits stimulates ATP hydrolysis and nucleotide exchange. Immobilization of the converter enables RuvB to convert the ATP-contained energy into a lever motion, pulling 2 nucleotides of DNA out of the RuvA tetramer per ATP hydrolyzed, thus driving DNA branch migration. The RuvB motors rotate together with the DNA substrate, which together with the progressing nucleotide cycle form the mechanistic basis for DNA recombination by continuous HJ branch migration. Branch migration allows RuvC to scan DNA until it finds its consensus sequence, where it cleaves and resolves cruciform DNA. The sequence is that of Holliday junction branch migration complex subunit RuvB from Mycolicibacterium smegmatis (strain ATCC 700084 / mc(2)155) (Mycobacterium smegmatis).